A 355-amino-acid chain; its full sequence is Elongation factor Ts (355 aa).

Residues 82-85 (TDFV) are involved in Mg(2+) ion dislocation from EF-Tu.

This sequence belongs to the EF-Ts family.

It localises to the cytoplasm. In terms of biological role, associates with the EF-Tu.GDP complex and induces the exchange of GDP to GTP. It remains bound to the aminoacyl-tRNA.EF-Tu.GTP complex up to the GTP hydrolysis stage on the ribosome. The protein is Elongation factor Ts of Helicobacter pylori (strain G27).